Reading from the N-terminus, the 356-residue chain is tRNA N6-adenosine threonylcarbamoyltransferase (356 aa).

Residues histidine 115 and histidine 119 each contribute to the Fe cation site. Substrate-binding positions include 138-142 (LVSGG), aspartate 171, glycine 184, and asparagine 283. Aspartate 311 contributes to the Fe cation binding site.

The protein belongs to the KAE1 / TsaD family. It depends on Fe(2+) as a cofactor.

It localises to the cytoplasm. It carries out the reaction L-threonylcarbamoyladenylate + adenosine(37) in tRNA = N(6)-L-threonylcarbamoyladenosine(37) in tRNA + AMP + H(+). In terms of biological role, required for the formation of a threonylcarbamoyl group on adenosine at position 37 (t(6)A37) in tRNAs that read codons beginning with adenine. Is involved in the transfer of the threonylcarbamoyl moiety of threonylcarbamoyl-AMP (TC-AMP) to the N6 group of A37, together with TsaE and TsaB. TsaD likely plays a direct catalytic role in this reaction. This is tRNA N6-adenosine threonylcarbamoyltransferase from Prochlorococcus marinus (strain MIT 9215).